Consider the following 970-residue polypeptide: MSIYRRYISKSVIFFSVFFVIFFLFIESSVGFKYIFNFTNRIFIGLKAEEISGNWRDFTLKNIKYDVFGISITANSLHIVLDTRSLFKMSTIFKKIETKNVILSLKKNTASNFSQNSLPSKISKNIFFIKYPIILKKIHADKILFTSPKVRVSFLDVLSGIKLVRNNIIFSPTYINTIHVSSAKFNFEKKNILNKSTIIKNFNKIKKIYSFSYFSSNQTKKNFPLNIYLKSLKCNKTQFIDYEYKNLLQVELQANIENNILQINKMKVDSSFLKMNSYGKVIFNNDYSISCVMNSKTVIPSLYNKSINFQLKANFNVDHQLIFKLISKDLYNMKINGLVFLNFSDYPFFIKLQSRNLSCVIKKNYIFKLKSFDGVLKGYINNYFFSLKNIFTLQDLPPIFIDIQGRGDLNNIFLKKINFFPIKQKKFYKKVIHPEDYIKYNQYILKLIGQINITGKSDRHTHYVHIPKIDLYANIMKKKLSILGALYYKNFNFIETPGINLLLGKNKLYLRGSLGKKYNIYSSIYANNLDYFFPKLQGRMQAKVNFLGNNKFPIISSKILARDLNWNNIYFKNIKVLTGININNTFSGKMLIYANKIHFYKFYINTLHIQTYSNNHKQNFSFLLKSNRLHINLIINGAFNNKTGHWHGFFKKINIRTFWGQVTAKKNNFIHYYDSHNSITNFYQKSIKKRNCFSSFLYNVKMSFFNLFNRSFISFESKLSINAKLKLILGKMISDGAIFLKGNNTKLEKKINKKIFIQNIDFFKISMNLIKNDFKSKWIIKKNKKLSNNKNIFGYLNIIDIYNKKNIKGEFIFYKFPFSFINFFTTNFKEVSGKFQSKIKLFGTLYQPKVLADVHFKNIFIRSNNILKYITLFFPYFLGKVDNIKINQEIMMNKGNILFTLKPFFKNNSADIEWNIAFNSKKISVLIFPKIKVKFSSKLNLHYLFSKYDLIGYIKFSLFYFQINEKNFIF.

A helical transmembrane segment spans residues 12-32 (VIFFSVFFVIFFLFIESSVGF).

To E.coli YtfN.

It is found in the membrane. This is an uncharacterized protein from Buchnera aphidicola subsp. Acyrthosiphon pisum (strain APS) (Acyrthosiphon pisum symbiotic bacterium).